We begin with the raw amino-acid sequence, 256 residues long: MGLLQDYVIIVTGSASGIGYATSSTALREGAHVFGVDVSPLPADLCDHPNFQSFQGDLTEDSTAQAVVTACTQAFGNRIDGLLNVAGVLDNFASVDAVTDQIWNKCLAVNLTAPVKLMRAVIPIMRTQKRGSIVNVSSKAGISGGAAGVAYTASKHGLIGVTKNVAWRFKEENIRCNAVCPGGVLTNIGSDIDRESFDMEAFETMKPVQLAHMPDQSKGPRITPEEVAQVMIFLVSGLSSKVNGAVIPVDDAWSTI.

3 residues coordinate NADP(+): valine 11, aspartate 57, and arginine 119. Serine 137 (proton donor) is an active-site residue. Residues tyrosine 151, lysine 155, glycine 183, and asparagine 187 each coordinate NADP(+). The Proton acceptor role is filled by tyrosine 151. Residue lysine 155 is the Lowers pKa of active site Tyr of the active site.

Belongs to the short-chain dehydrogenases/reductases (SDR) family.

The catalysed reaction is 3-hydroxypentacecilide A + A = chrodrimanin C + AH2. It carries out the reaction chrodrimanin F + A = chrodrimanin H + AH2. It functions in the pathway secondary metabolite biosynthesis; terpenoid biosynthesis. Short-chain dehydrogenase/reductase; part of the gene cluster that mediates the biosynthesis of chrodrimanin B, a meroterpenoid that acts as a potent blocker of insect GABA-gated chloride channels. The first step of the pathway is the biosynthesis of 6-hydroxymellein by the polyketide synthase cdmE. The prenyltransferase cdmH acts as a 6-hydroxymellein 5-farnesyltransferase and produces the hydrophobic metabolite verruculide C. The FAD-dependent monooxygenase cdmI further converts verruculide C into verruculide B. The terpene cyclase cdmG then produced the pentacyclic molecule 3-hydroxypentacecilide A, the backbone structure of chrodrimanin B, via folding the farnesyl moiety of the substrate into the chair-boat conformation. The short-chain dehydrogenase/reductase cdmF functions as the 3-OH dehydrogenase that oxidizes the C-3 hydroxyl group of 3-hydroxypentacecilide A and produces chrodrimanin C, the dehydrogenated product of 3-hydroxypentacecilide A. The cytochrome P450 monooxygenase cdmJ then accepts both 3-hydroxypentacecilide A and chrodrimanin C and functions as a C-7-beta-hydroxylase to produce respectively chrodrimanin H and chrodrimanin F. The dioxygenase cdmA accepts chrodrimanin H to afford chrodrimanin E, which is further transformed to chrodrimanin A by the dioxygenase cdmD. CdmA can also accept chrodrimanin C as substrate to convert it into verruculide A, which is further converted into chrodrimanin T by cdmD. The last step of the biosynthesis is proposed to be performed by the acetyltransferase cdmC which acetylates chrodrimanin A to yield chrodrimanin B. The pathway may also lead to the production of additional shunt products, including chrodrimanins T and U. The chain is Short-chain dehydrogenase/reductase cdmF from Talaromyces verruculosus (Penicillium verruculosum).